The following is a 426-amino-acid chain: Enolase (426 aa).

(2R)-2-phosphoglycerate is bound at residue glutamine 163. Glutamate 205 acts as the Proton donor in catalysis. The Mg(2+) site is built by aspartate 242, glutamate 286, and aspartate 313. (2R)-2-phosphoglycerate is bound by residues lysine 338, arginine 367, serine 368, and lysine 389. Catalysis depends on lysine 338, which acts as the Proton acceptor.

Belongs to the enolase family. Mg(2+) is required as a cofactor.

It localises to the cytoplasm. Its subcellular location is the secreted. The protein localises to the cell surface. It carries out the reaction (2R)-2-phosphoglycerate = phosphoenolpyruvate + H2O. The protein operates within carbohydrate degradation; glycolysis; pyruvate from D-glyceraldehyde 3-phosphate: step 4/5. Its function is as follows. Catalyzes the reversible conversion of 2-phosphoglycerate (2-PG) into phosphoenolpyruvate (PEP). It is essential for the degradation of carbohydrates via glycolysis. The chain is Enolase from Syntrophobacter fumaroxidans (strain DSM 10017 / MPOB).